The sequence spans 518 residues: Light-independent protochlorophyllide reductase subunit B (518 aa).

Aspartate 36 contacts [4Fe-4S] cluster. Catalysis depends on aspartate 285, which acts as the Proton donor. Substrate is bound at residue 420 to 421 (GL).

The protein belongs to the ChlB/BchB/BchZ family. As to quaternary structure, protochlorophyllide reductase is composed of three subunits; BchL, BchN and BchB. Forms a heterotetramer of two BchB and two BchN subunits. [4Fe-4S] cluster serves as cofactor.

The catalysed reaction is chlorophyllide a + oxidized 2[4Fe-4S]-[ferredoxin] + 2 ADP + 2 phosphate = protochlorophyllide a + reduced 2[4Fe-4S]-[ferredoxin] + 2 ATP + 2 H2O. The protein operates within porphyrin-containing compound metabolism; bacteriochlorophyll biosynthesis (light-independent). Component of the dark-operative protochlorophyllide reductase (DPOR) that uses Mg-ATP and reduced ferredoxin to reduce ring D of protochlorophyllide (Pchlide) to form chlorophyllide a (Chlide). This reaction is light-independent. The NB-protein (BchN-BchB) is the catalytic component of the complex. This Bradyrhizobium sp. (strain ORS 278) protein is Light-independent protochlorophyllide reductase subunit B.